The primary structure comprises 162 residues: Protein hcp1 (162 aa).

Belongs to the hcp1 family. As to quaternary structure, hexamer. Three hcp1 monomers form two closely related hexameric rings with a 40 Angstrom internal diameter.

The protein localises to the secreted. Required for assembly of the protein secretion apparatus HSI-I. Actively secreted during chronic infection of cystic fibrosis patients. The protein is Protein hcp1 (hcp1) of Pseudomonas aeruginosa (strain ATCC 15692 / DSM 22644 / CIP 104116 / JCM 14847 / LMG 12228 / 1C / PRS 101 / PAO1).